The sequence spans 180 residues: Cell division protein SepF (180 aa).

Residues 21 to 40 (LDDDYDDGRAVGRDDRRAMH) are disordered. Positions 27-40 (DGRAVGRDDRRAMH) are enriched in basic and acidic residues.

The protein belongs to the SepF family. Homodimer. Interacts with FtsZ.

It is found in the cytoplasm. Cell division protein that is part of the divisome complex and is recruited early to the Z-ring. Probably stimulates Z-ring formation, perhaps through the cross-linking of FtsZ protofilaments. Its function overlaps with FtsA. This chain is Cell division protein SepF, found in Frankia casuarinae (strain DSM 45818 / CECT 9043 / HFP020203 / CcI3).